A 312-amino-acid chain; its full sequence is ADIPOR-like receptor IZH4 (312 aa).

Residues 1 to 38 (MVSLTTIEQSPVKCETTTEKESNDTRGTDSNENAETKE) form a disordered region. Topologically, residues 1–64 (MVSLTTIEQS…YKNKSSRNES (64 aa)) are cytoplasmic. The span at 16-38 (TTTEKESNDTRGTDSNENAETKE) shows a compositional bias: basic and acidic residues. A helical transmembrane segment spans residues 65-85 (LVALIYLLGSMLSFCLLIFFT). The Lumenal portion of the chain corresponds to 86-101 (DFYLIPLFPTTTTMTD). The chain crosses the membrane as a helical span at residues 102-122 (YIVFNFYLLNVFVFCMVHFIY). Residues 123-141 (HFVKNISLQQHLEHWQKFS) are Cytoplasmic-facing. A helical transmembrane segment spans residues 142–162 (YLSNINLLISSQITILYYLFY). The Lumenal segment spans residues 163–165 (DYV). A helical transmembrane segment spans residues 166–186 (FFFKIFTLLMNFIGLVAYFFI). Residues 187 to 201 (LTDKLISSKRFNKTV) are Cytoplasmic-facing. A helical membrane pass occupies residues 202–222 (FFISVSVVCCSLPLLTAIITF). Over 223–231 (DGLENLKER) the chain is Lumenal. A helical transmembrane segment spans residues 232-252 (IKVNAITWELVALVAASIIYV). Topologically, residues 253 to 277 (TRFPESLFRRNKKEEGWNHSEYLFH) are cytoplasmic. Residues 278–298 (LLISGTAFYHFFILIQSYILM) traverse the membrane as a helical segment. Over 299–312 (HSSLNQPELINFKS) the chain is Lumenal.

The protein belongs to the ADIPOR family.

It is found in the endoplasmic reticulum membrane. In terms of biological role, ADIPOR-like receptor involved in zinc metabolism either by altering membrane sterol content or by directly altering cellular zinc levels. This chain is ADIPOR-like receptor IZH4 (IZH4), found in Saccharomyces cerevisiae (strain ATCC 204508 / S288c) (Baker's yeast).